We begin with the raw amino-acid sequence, 96 residues long: Protein RnfH (96 aa).

This sequence belongs to the UPF0125 (RnfH) family.

This chain is Protein RnfH, found in Psychromonas ingrahamii (strain DSM 17664 / CCUG 51855 / 37).